A 39-amino-acid chain; its full sequence is Fuctinin-3 (39 aa).

A disordered region spans residues 1–39 (KELNSNHDGADETSEKEQQEAIEHIDEVQNEIDRLNETA).

To human SET/PHAPII protein. As to quaternary structure, oligomer.

Its subcellular location is the cytoplasm. Functionally, has a role in the physiological regulation of fucosylation processes. This Rattus norvegicus (Rat) protein is Fuctinin-3.